The following is a 327-amino-acid chain: Leucotoxin LukDv (327 aa).

Positions 1 to 26 (MKMKKLVKSSVASSIALLLLSNTVDA) are cleaved as a signal peptide.

The protein belongs to the aerolysin family. As to quaternary structure, toxicity requires sequential binding and synergistic association of a class S and a class F component which form heterooligomeric complexes. LukEv (class S) associates with LukDv (class F).

It localises to the secreted. Part of a bi-component leucotoxin that acts by forming pores in the membrane of the target cells. The activity of LukEv-LukDv to rabbit leukocytes is similar to that of the Panton-Valentine leucocidin (PVL). LukEv-LukDv is hemolytic to rabbit red blood cells although the activity is only 8% of gamma-hemolysin. The chain is Leucotoxin LukDv (lukDv) from Staphylococcus aureus (strain NCTC 8325 / PS 47).